A 359-amino-acid polypeptide reads, in one-letter code: Isopentenyl-diphosphate delta-isomerase (359 aa).

Position 11–12 (11–12 (RK)) interacts with substrate. Residues Ser68, 69 to 71 (GMT), Ser99, and Asn127 each bind FMN. A substrate-binding site is contributed by 99-101 (SQR). Position 163 (Gln163) interacts with substrate. A Mg(2+)-binding site is contributed by Glu164. FMN-binding positions include Lys199, Thr229, 278 to 280 (GIR), and 299 to 300 (AL).

The protein belongs to the IPP isomerase type 2 family. As to quaternary structure, homooctamer. Dimer of tetramers. Requires FMN as cofactor. It depends on NADPH as a cofactor. Mg(2+) is required as a cofactor.

It localises to the cytoplasm. The enzyme catalyses isopentenyl diphosphate = dimethylallyl diphosphate. Inhibited by 3,4-epoxy-3-methylbutyl diphosphate (EIPP). Its function is as follows. Involved in the biosynthesis of isoprenoids. Catalyzes the 1,3-allylic rearrangement of the homoallylic substrate isopentenyl (IPP) to its allylic isomer, dimethylallyl diphosphate (DMAPP). This Methanocaldococcus jannaschii (strain ATCC 43067 / DSM 2661 / JAL-1 / JCM 10045 / NBRC 100440) (Methanococcus jannaschii) protein is Isopentenyl-diphosphate delta-isomerase.